The sequence spans 363 residues: Fructose-bisphosphate aldolase C-B (363 aa).

Positions 56 and 147 each coordinate substrate. E188 functions as the Proton acceptor in the catalytic mechanism. K230 (schiff-base intermediate with dihydroxyacetone-P) is an active-site residue.

The protein belongs to the class I fructose-bisphosphate aldolase family. As to quaternary structure, homotetramer.

It catalyses the reaction beta-D-fructose 1,6-bisphosphate = D-glyceraldehyde 3-phosphate + dihydroxyacetone phosphate. It participates in carbohydrate degradation; glycolysis; D-glyceraldehyde 3-phosphate and glycerone phosphate from D-glucose: step 4/4. The protein is Fructose-bisphosphate aldolase C-B (aldocb) of Danio rerio (Zebrafish).